Consider the following 555-residue polypeptide: MKNINLIETKSWKDLKNHFKEVKNIHLKDLFLSDFNRFKKFSIFFENEILIDFSKNRITEKTLILLLNLAKEMNVKSAIKLMFSGSKINQTENRSVLHIALRNRSNFPILLNNSDIMSEVNDVLKKMKNFSELVIDGTWKGYSGKSISDVVNIGIGGSDLGPYMVTEALRPYKNHLNIHYVSNIDGTHLSEILKKINPETTIFLIASKTFTTDETITNANSAKFWFLKHSKTKETLDKHFFALSANINNAVNFGINIKNIFQFWDWVGGRFSLWSSAGLSIVLSIGFNNFEKFLQGAHVMDNHFYHTEYDKNIPILLALISIWYTNFFNSETEAIFPYDQYMHRFSAYFQQSNMESNGKSIDKNGNKVCYQTGPIIWGEPGTNGQHAFFQLIHQGTKLIPSDFIVPTVSHNNLNDHHLKLISNFLAQTQVLAFGKSKNSFLKESTSFKKEEDEFNRILPFKICEGNKPTNSILLRKITPYTLGMLIALYEHKIFVQGHILNIFSFDQWGVEIGKEVAQSIYKNINEKTKNSKSYDSSTQGLIDFYNFFKNKQNYL.

The active-site Proton donor is the Glu-355. Catalysis depends on residues His-386 and Lys-514.

This sequence belongs to the GPI family.

It localises to the cytoplasm. It catalyses the reaction alpha-D-glucose 6-phosphate = beta-D-fructose 6-phosphate. It functions in the pathway carbohydrate biosynthesis; gluconeogenesis. The protein operates within carbohydrate degradation; glycolysis; D-glyceraldehyde 3-phosphate and glycerone phosphate from D-glucose: step 2/4. In terms of biological role, catalyzes the reversible isomerization of glucose-6-phosphate to fructose-6-phosphate. The chain is Glucose-6-phosphate isomerase from Buchnera aphidicola subsp. Schizaphis graminum (strain Sg).